The primary structure comprises 272 residues: Centromere protein V-like protein 3 (272 aa).

Positions 1–17 (MGRVRNRATAQRRRRKR) are enriched in basic residues. Disordered stretches follow at residues 1 to 23 (MGRV…DPPA) and 65 to 95 (RRAR…KELD). A compositionally biased stretch (pro residues) spans 77–88 (PSAPLPDPPAPA). A CENP-V/GFA domain is found at 133–246 (HTGGCHCGAV…EEVGGGDPGE (114 aa)). The Zn(2+) site is built by C137, C139, C157, C159, C162, C201, and C204. Residues 240-272 (GGGDPGEEAAEEHKAIHKTSSQSAPACPREQEQ) are disordered.

The protein belongs to the Gfa family. The cofactor is Zn(2+).

The sequence is that of Centromere protein V-like protein 3 from Homo sapiens (Human).